The primary structure comprises 104 residues: Large ribosomal subunit protein uL24 (104 aa).

The protein belongs to the universal ribosomal protein uL24 family. In terms of assembly, part of the 50S ribosomal subunit.

Functionally, one of two assembly initiator proteins, it binds directly to the 5'-end of the 23S rRNA, where it nucleates assembly of the 50S subunit. In terms of biological role, one of the proteins that surrounds the polypeptide exit tunnel on the outside of the subunit. In Pseudomonas syringae pv. syringae (strain B728a), this protein is Large ribosomal subunit protein uL24.